Reading from the N-terminus, the 112-residue chain is DNA-binding protein TGAM_1196 (112 aa).

Belongs to the PDCD5 family.

This is DNA-binding protein TGAM_1196 from Thermococcus gammatolerans (strain DSM 15229 / JCM 11827 / EJ3).